Reading from the N-terminus, the 158-residue chain is Low molecular weight phosphotyrosine protein phosphatase (158 aa).

An N-acetylalanine modification is found at alanine 2. The Nucleophile role is filled by cysteine 13. Residue arginine 19 is part of the active site. The active-site Proton donor is the aspartate 130. Phosphotyrosine is present on residues tyrosine 132 and tyrosine 133.

The protein belongs to the low molecular weight phosphotyrosine protein phosphatase family. Interacts with EPHA2; dephosphorylates EPHA2. Interacts with EPHB1. In terms of assembly, interacts with the SH3 domain of SPTAN1. There is no interaction observed for isoforms 2 or 3. Post-translationally, phosphorylated by LCK. Phosphorylation at Tyr-132 increases its phosphatase activity. Not phosphorylated. Expressed in T-lymphocytes.

It localises to the cytoplasm. The enzyme catalyses O-phospho-L-tyrosyl-[protein] + H2O = L-tyrosyl-[protein] + phosphate. It catalyses the reaction a phosphate monoester + H2O = an alcohol + phosphate. With respect to regulation, inhibited by sulfhydryl reagents. In terms of biological role, acts on tyrosine phosphorylated proteins, low-MW aryl phosphates and natural and synthetic acyl phosphates with differences in substrate specificity between isoform 1 and isoform 2. Its function is as follows. Does not possess phosphatase activity. This chain is Low molecular weight phosphotyrosine protein phosphatase, found in Homo sapiens (Human).